A 395-amino-acid chain; its full sequence is Elongation factor Tu (395 aa).

Residues 10–204 form the tr-type G domain; it reads KPHLNIGTIG…AVDTWIELPE (195 aa). The interval 19 to 26 is G1; the sequence is GHVDHGKT. Residue 19 to 26 coordinates GTP; the sequence is GHVDHGKT. T26 provides a ligand contact to Mg(2+). Positions 60 to 64 are G2; that stretch reads GITIN. A G3 region spans residues 81 to 84; that stretch reads DCPG. Residues 81 to 85 and 136 to 139 each bind GTP; these read DCPGH and NKVD. Residues 136-139 form a G4 region; it reads NKVD. Residues 174 to 176 are G5; the sequence is SAL.

This sequence belongs to the TRAFAC class translation factor GTPase superfamily. Classic translation factor GTPase family. EF-Tu/EF-1A subfamily. Monomer.

Its subcellular location is the cytoplasm. It carries out the reaction GTP + H2O = GDP + phosphate + H(+). In terms of biological role, GTP hydrolase that promotes the GTP-dependent binding of aminoacyl-tRNA to the A-site of ribosomes during protein biosynthesis. The polypeptide is Elongation factor Tu (Christiangramia forsetii (strain DSM 17595 / CGMCC 1.15422 / KT0803) (Gramella forsetii)).